Here is a 993-residue protein sequence, read N- to C-terminus: Vinculin (993 aa).

2 consecutive repeat copies span residues 258–364 (DSDN…TKEI) and 373–480 (TNTQ…ELVD). Residues 258–480 (DSDNVTVMRK…LRNKLRELVD (223 aa)) are 2 X repeats. Residues 730-797 (ITGAGGSRPP…PPPETDDEEE (68 aa)) are disordered. Positions 758 to 768 (VHDRIYIREDI) are enriched in basic and acidic residues. A compositionally biased stretch (pro residues) spans 769 to 790 (PTPPRPPPPVEISPPPRPPPPP).

This sequence belongs to the vinculin/alpha-catenin family. As to quaternary structure, exhibits self-association properties.

It is found in the cytoplasm. The protein resides in the cytoskeleton. It localises to the cell junction. The protein localises to the adherens junction. Its subcellular location is the cell membrane. Functionally, involved in cell adhesion. May be involved in the attachment of the actin-based microfilaments to the plasma membrane. This chain is Vinculin, found in Brugia malayi (Filarial nematode worm).